The following is a 255-amino-acid chain: MLKIGDKQFESRLFTGTGKFANSRLMAEAIQVSGSQLATMALKRVDVNDQQDDILLPLVQAGVNLLPNTSGAKNAKDAVFAAQLAREALGTNWLKLEIHPDPKYLMPDPIETLSAAEQLVREGFIVLPYCHADPVLCKRLEEVGCAAVMPLGAPIGSNKGIVSHDFLEIIIDQANVPVVVDAGIGSPSHAARAMEMGADAVLVNTAIAASNDPVAMAKAFKLAVESGRMAYEAGLACKVSHAVASSPLTSFLDEL.

K95 functions as the Schiff-base intermediate with DXP in the catalytic mechanism. Residues G156, 182-183 (AG), and 204-205 (NT) each bind 1-deoxy-D-xylulose 5-phosphate.

This sequence belongs to the ThiG family. Homotetramer. Forms heterodimers with either ThiH or ThiS.

The protein localises to the cytoplasm. The catalysed reaction is [ThiS sulfur-carrier protein]-C-terminal-Gly-aminoethanethioate + 2-iminoacetate + 1-deoxy-D-xylulose 5-phosphate = [ThiS sulfur-carrier protein]-C-terminal Gly-Gly + 2-[(2R,5Z)-2-carboxy-4-methylthiazol-5(2H)-ylidene]ethyl phosphate + 2 H2O + H(+). The protein operates within cofactor biosynthesis; thiamine diphosphate biosynthesis. Catalyzes the rearrangement of 1-deoxy-D-xylulose 5-phosphate (DXP) to produce the thiazole phosphate moiety of thiamine. Sulfur is provided by the thiocarboxylate moiety of the carrier protein ThiS. In vitro, sulfur can be provided by H(2)S. The sequence is that of Thiazole synthase from Vibrio campbellii (strain ATCC BAA-1116).